The following is a 330-amino-acid chain: MKIAVLGGGSWGTALAHLLAGKGEDVRLWVRDPAVVEGVNRDHENPRYLKGLHLHEALRATCDAGEALEGADILLSVVPCQQTRSVLRSLRPRLKSGMVVVSASKGIETDGLRTVGEMVEEELAGLAPRYAVISGPSFAAEVVAGMPTAVVLGCADRDLGGTLREVFSTPTFRTYSCTDVRGVELGGAVKNVIAIAAGLSDGLGFGSNARAGLITRGLAEMGRLGVALGARASTFMGLSGLGDLVLTCTGDLSRNRQVGLRLAAGQGLDAIVAGMGMVAEGVKTTEAVHALARREGADLPITRAMYAVLHDGRDPRDMVQELMTRELREE.

Positions 10, 11, 31, and 105 each coordinate NADPH. 3 residues coordinate sn-glycerol 3-phosphate: lysine 105, glycine 135, and serine 137. Alanine 139 contacts NADPH. Lysine 190, aspartate 243, serine 253, arginine 254, and asparagine 255 together coordinate sn-glycerol 3-phosphate. Catalysis depends on lysine 190, which acts as the Proton acceptor. Residue arginine 254 participates in NADPH binding. The NADPH site is built by valine 278 and glutamate 280.

This sequence belongs to the NAD-dependent glycerol-3-phosphate dehydrogenase family.

It localises to the cytoplasm. It carries out the reaction sn-glycerol 3-phosphate + NAD(+) = dihydroxyacetone phosphate + NADH + H(+). The catalysed reaction is sn-glycerol 3-phosphate + NADP(+) = dihydroxyacetone phosphate + NADPH + H(+). The protein operates within membrane lipid metabolism; glycerophospholipid metabolism. Catalyzes the reduction of the glycolytic intermediate dihydroxyacetone phosphate (DHAP) to sn-glycerol 3-phosphate (G3P), the key precursor for phospholipid synthesis. This is Glycerol-3-phosphate dehydrogenase [NAD(P)+] from Nitratidesulfovibrio vulgaris (strain DP4) (Desulfovibrio vulgaris).